Reading from the N-terminus, the 640-residue chain is Glutamyl-tRNA(Gln) amidotransferase subunit E (640 aa).

This sequence belongs to the GatB/GatE family. GatE subfamily. As to quaternary structure, heterodimer of GatD and GatE.

The enzyme catalyses L-glutamyl-tRNA(Gln) + L-glutamine + ATP + H2O = L-glutaminyl-tRNA(Gln) + L-glutamate + ADP + phosphate + H(+). Its function is as follows. Allows the formation of correctly charged Gln-tRNA(Gln) through the transamidation of misacylated Glu-tRNA(Gln) in organisms which lack glutaminyl-tRNA synthetase. The reaction takes place in the presence of glutamine and ATP through an activated gamma-phospho-Glu-tRNA(Gln). The GatDE system is specific for glutamate and does not act on aspartate. The protein is Glutamyl-tRNA(Gln) amidotransferase subunit E of Methanopyrus kandleri (strain AV19 / DSM 6324 / JCM 9639 / NBRC 100938).